Consider the following 301-residue polypeptide: Probable alpha-L-glutamate ligase (301 aa).

The 184-residue stretch at 104 to 287 folds into the ATP-grasp domain; the sequence is LQLLARKGIG…VATKVIEFIE (184 aa). Residues lysine 141, 178–179, aspartate 187, and 211–213 each bind ATP; these read EF and RSN. Mg(2+) is bound by residues aspartate 248, glutamate 260, and asparagine 262. 3 residues coordinate Mn(2+): aspartate 248, glutamate 260, and asparagine 262.

This sequence belongs to the RimK family. Requires Mg(2+) as cofactor. Mn(2+) serves as cofactor.

The protein is Probable alpha-L-glutamate ligase of Nitrosococcus oceani (strain ATCC 19707 / BCRC 17464 / JCM 30415 / NCIMB 11848 / C-107).